Reading from the N-terminus, the 459-residue chain is Glycosyl hydrolase family 109 protein (459 aa).

The segment at residues 1-45 (MAGDESRSNPFSRRTLLRTSAAAGAGLGVAGLSTGYGAAQPVRPA) is a signal peptide (tat-type signal). NAD(+)-binding positions include 70–71 (NR), Asp92, 141–144 (WEWH), 161–162 (EC), and Asn190. Substrate is bound by residues Tyr219, Arg238, 250-253 (YPTH), and Tyr332. Tyr250 lines the NAD(+) pocket. Residues 440–459 (DFTRGRWQTPHPGVDSPKPA) are disordered.

It belongs to the Gfo/Idh/MocA family. Glycosyl hydrolase 109 subfamily. NAD(+) is required as a cofactor. Predicted to be exported by the Tat system. The position of the signal peptide cleavage has not been experimentally proven.

Glycosidase. In Saccharopolyspora erythraea (strain ATCC 11635 / DSM 40517 / JCM 4748 / NBRC 13426 / NCIMB 8594 / NRRL 2338), this protein is Glycosyl hydrolase family 109 protein.